We begin with the raw amino-acid sequence, 160 residues long: 6,7-dimethyl-8-ribityllumazine synthase (160 aa).

Residues Trp28, 59-61, and 82-84 each bind 5-amino-6-(D-ribitylamino)uracil; these read SFE and VII. 87–88 serves as a coordination point for (2S)-2-hydroxy-3-oxobutyl phosphate; that stretch reads GT. The active-site Proton donor is the His90. Phe115 lines the 5-amino-6-(D-ribitylamino)uracil pocket. Arg129 is a (2S)-2-hydroxy-3-oxobutyl phosphate binding site.

Belongs to the DMRL synthase family.

It carries out the reaction (2S)-2-hydroxy-3-oxobutyl phosphate + 5-amino-6-(D-ribitylamino)uracil = 6,7-dimethyl-8-(1-D-ribityl)lumazine + phosphate + 2 H2O + H(+). Its pathway is cofactor biosynthesis; riboflavin biosynthesis; riboflavin from 2-hydroxy-3-oxobutyl phosphate and 5-amino-6-(D-ribitylamino)uracil: step 1/2. Functionally, catalyzes the formation of 6,7-dimethyl-8-ribityllumazine by condensation of 5-amino-6-(D-ribitylamino)uracil with 3,4-dihydroxy-2-butanone 4-phosphate. This is the penultimate step in the biosynthesis of riboflavin. The polypeptide is 6,7-dimethyl-8-ribityllumazine synthase (Clavibacter sepedonicus (Clavibacter michiganensis subsp. sepedonicus)).